Reading from the N-terminus, the 82-residue chain is Small ribosomal subunit protein bS16 (82 aa).

This sequence belongs to the bacterial ribosomal protein bS16 family.

This Yersinia enterocolitica serotype O:8 / biotype 1B (strain NCTC 13174 / 8081) protein is Small ribosomal subunit protein bS16.